The sequence spans 320 residues: Heptaprenyl diphosphate synthase component 2 (320 aa).

The isopentenyl diphosphate site is built by Lys45, Arg48, and His77. Residues Asp84 and Asp88 each contribute to the Mg(2+) site. All-trans-hexaprenyl diphosphate is bound at residue Arg93. Arg94 serves as a coordination point for isopentenyl diphosphate. Residues Lys170, Thr171, and Gln208 each contribute to the all-trans-hexaprenyl diphosphate site.

It belongs to the FPP/GGPP synthase family. As to quaternary structure, heterodimer of component I and II. The cofactor is Mg(2+).

The enzyme catalyses 4 isopentenyl diphosphate + (2E,6E)-farnesyl diphosphate = all-trans-heptaprenyl diphosphate + 4 diphosphate. Functionally, supplies heptaprenyl diphosphate, the precursor for the side chain of the isoprenoid quinone menaquinone-7 (MQ-7). In Geobacillus stearothermophilus (Bacillus stearothermophilus), this protein is Heptaprenyl diphosphate synthase component 2 (hepT).